The chain runs to 838 residues: Lymphoid-specific helicase (838 aa).

The stretch at 30 to 115 (MLEEEEQLEA…SLKVKKGKNS (86 aa)) forms a coiled coil. Residues 94 to 108 (QKKKEKLERKKESLK) are compositionally biased toward basic and acidic residues. A disordered region spans residues 94 to 135 (QKKKEKLERKKESLKVKKGKNSIDASEEKPVMRKKRGREDES). Position 115 is a phosphoserine (serine 115). The span at 119–134 (SEEKPVMRKKRGREDE) shows a compositional bias: basic and acidic residues. Positions 235–403 (RMLWENGING…WSLLNFLLPD (169 aa)) constitute a Helicase ATP-binding domain. 248-255 (DEMGLGKT) contacts ATP. Residues 354-357 (DEGH) carry the DEAH box motif. Phosphoserine is present on residues serine 503 and serine 515. Residues 603–767 (ILDRMLPELK…GLNLSKNFLD (165 aa)) form the Helicase C-terminal domain.

Belongs to the SNF2/RAD54 helicase family. Highly expressed in proliferative tissues such as adult thymus and testis, and expressed at lower levels in uterus, small intestine, colon, and peripheral blood mononuclear cells. Also expressed in neoplastic cell lines including those derived from myeloid and lymphoid leukemias.

Its subcellular location is the nucleus. Functionally, plays an essential role in normal development and survival. Involved in regulation of the expansion or survival of lymphoid cells. Required for de novo or maintenance DNA methylation. May control silencing of the imprinted CDKN1C gene through DNA methylation. May play a role in formation and organization of heterochromatin, implying a functional role in the regulation of transcription and mitosis. The protein is Lymphoid-specific helicase of Homo sapiens (Human).